A 732-amino-acid polypeptide reads, in one-letter code: Catalase-peroxidase (732 aa).

Residues 96-219 constitute a cross-link (tryptophyl-tyrosyl-methioninium (Trp-Tyr) (with M-245)); it reads WHSAGTYRIG…LGAVQMGLIY (124 aa). His97 acts as the Proton acceptor in catalysis. The segment at residues 219-245 is a cross-link (tryptophyl-tyrosyl-methioninium (Tyr-Met) (with W-96)); the sequence is YVNPEGPNGHPDPVASGRDIRETFGRM. His260 lines the heme b pocket.

It belongs to the peroxidase family. Peroxidase/catalase subfamily. As to quaternary structure, homodimer or homotetramer. The cofactor is heme b. In terms of processing, formation of the three residue Trp-Tyr-Met cross-link is important for the catalase, but not the peroxidase activity of the enzyme.

It catalyses the reaction H2O2 + AH2 = A + 2 H2O. The catalysed reaction is 2 H2O2 = O2 + 2 H2O. Functionally, bifunctional enzyme with both catalase and broad-spectrum peroxidase activity. In Acaryochloris marina (strain MBIC 11017), this protein is Catalase-peroxidase.